Reading from the N-terminus, the 705-residue chain is Translation factor GUF1 homolog, mitochondrial (705 aa).

Residues 1–20 (MVCHRYLLGLGASTLCLRRL) constitute a mitochondrion transit peptide. The disordered stretch occupies residues 72 to 92 (PVEDNGTTNLTGTGEATSETG). Polar residues predominate over residues 76–90 (NGTTNLTGTGEATSE). A tr-type G domain is found at 105–288 (NRMRNFCIIA…AVVERIPPPK (184 aa)). GTP contacts are provided by residues 114–121 (AHVDHGKS), 181–185 (DTPGH), and 235–238 (NKID).

The protein belongs to the TRAFAC class translation factor GTPase superfamily. Classic translation factor GTPase family. LepA subfamily.

It localises to the mitochondrion inner membrane. The enzyme catalyses GTP + H2O = GDP + phosphate + H(+). Its function is as follows. Promotes mitochondrial protein synthesis. May act as a fidelity factor of the translation reaction, by catalyzing a one-codon backward translocation of tRNAs on improperly translocated ribosomes. Binds to mitochondrial ribosomes in a GTP-dependent manner. This chain is Translation factor GUF1 homolog, mitochondrial, found in Babesia bovis.